An 830-amino-acid polypeptide reads, in one-letter code: MDVQPARTMRNLPDTLSSLMGFNKHLTPSWIESVSHIIDGLSPTKPQMKVMVEKDENISDDNTESEAKVQKIQDELVSLNAQLKQITLQRREALNNYLDLKGNIRVFCRIRPFHHEESYSSRNLFTLDESNVFLKVAETKRKQYKFDKVFDQFSTQGDVFSEVEPVIKSALDGYNVCIFAYGQTGSGKTYTMEGKPTNLGVIPRGIQTLFNQASECNNRFLFTFSMLEIYMGNIRDLLAPRSKTNGIKNVPSLSIKSDPDGGIEIEDLVAVTVNSFQEVKRLYEMGTRLRSTASTMANSTSSRSHCLIRISLTSLNATERRKATSKLWMIDLGGSERLVKTKATGKRLKEGKAINLSLSALGDVIDALQTKKPHVPYRNSKLTQVLRDSLGCESKTLMLVHISPDEGDLCETICTLGFATRVRSIRLESEEPPEMKARKETLLIDLGQKVNDLEHECEDIRRKIKNLEESMEHLTGPQPTIYSNFDMSHLSSEELKTDVSSNVRNSKNRREASSRLPRFMKPTASSQHRIGLNNRTPIINRLKPPVPPRRRPSSVYAESVMVPVNAAPWQSECSSECSMSLTSDMNWTPSIRDGTECSQDASEYEIKQVIFSEHEKSSHDQVTCYTDYPLAESRDIQIKIEEKGIVDIDNWLHQQIVEKTSTFRSKMVLDIPGVTEAEIHVSSIPSPTTMACTKEDSQVKDEVMGLTLQSSTDYVEDIKQSKTDNQFTAKELCTPPFKEFSSNNEVKGHKNEHPVYHGRPRRSLQEELENCTLEKPNMDSKSHRSHDDKHKTGKFTKFFQALQTAWIGALLALGTVSIGLEHGFFQSLTL.

Residues 56–97 adopt a coiled-coil conformation; the sequence is ENISDDNTESEAKVQKIQDELVSLNAQLKQITLQRREALNNY. Positions 103–425 constitute a Kinesin motor domain; it reads NIRVFCRIRP…LGFATRVRSI (323 aa). ATP is bound at residue 182–189; it reads GQTGSGKT. Residues 434–476 are a coiled coil; it reads EMKARKETLLIDLGQKVNDLEHECEDIRRKIKNLEESMEHLTG.

It belongs to the TRAFAC class myosin-kinesin ATPase superfamily. Kinesin family. KIN-14 subfamily.

The sequence is that of Kinesin-like protein KIN-14B from Oryza sativa subsp. japonica (Rice).